Consider the following 513-residue polypeptide: Putative ATP-dependent RNA helicase QP509L (513 aa).

The region spanning 110-262 (KKLLSPYGRF…KIIIHHLGQP (153 aa)) is the Helicase ATP-binding domain. 123 to 130 (LNTGLGKT) provides a ligand contact to ATP. Positions 215–218 (DEAH) match the DEAH box motif.

It belongs to the DEAD box helicase family. DEAH subfamily.

The enzyme catalyses ATP + H2O = ADP + phosphate + H(+). In Ornithodoros (relapsing fever ticks), this protein is Putative ATP-dependent RNA helicase QP509L.